The chain runs to 177 residues: ATP synthase subunit delta 1 (177 aa).

This sequence belongs to the ATPase delta chain family. F-type ATPases have 2 components, F(1) - the catalytic core - and F(0) - the membrane proton channel. F(1) has five subunits: alpha(3), beta(3), gamma(1), delta(1), epsilon(1). F(0) has three main subunits: a(1), b(2) and c(10-14). The alpha and beta chains form an alternating ring which encloses part of the gamma chain. F(1) is attached to F(0) by a central stalk formed by the gamma and epsilon chains, while a peripheral stalk is formed by the delta and b chains.

The protein resides in the cell inner membrane. Its function is as follows. F(1)F(0) ATP synthase produces ATP from ADP in the presence of a proton or sodium gradient. F-type ATPases consist of two structural domains, F(1) containing the extramembraneous catalytic core and F(0) containing the membrane proton channel, linked together by a central stalk and a peripheral stalk. During catalysis, ATP synthesis in the catalytic domain of F(1) is coupled via a rotary mechanism of the central stalk subunits to proton translocation. In terms of biological role, this protein is part of the stalk that links CF(0) to CF(1). It either transmits conformational changes from CF(0) to CF(1) or is implicated in proton conduction. This is ATP synthase subunit delta 1 from Photobacterium profundum (strain SS9).